A 492-amino-acid polypeptide reads, in one-letter code: MAPGGGRGSKTASYGNSDFVVVANRLPVDQERLPDGSTAWKRSPGGLVTALEPLLRRQRGAWVGWPGIVDEDVDHEDDPIVQDDLELRPVKLSADDVAEYYEGFSNATLWPLYHDVIVKPIYHREWWDRYVAVNRRFAEATSRAAARGATVWVQDYQLQLVPAMLRELRPDLTIGFFLHIPFPPVELFMQLPWRTEIVKGLLGADLVGFHLTGGAQNFLFLSRRLIGANTSRGAVGVRSRYGEVELESRVVRVGAFPISIDSTALDQTARHRDIRRRAREIRAELGNPRKVLLGVDRLDYTKGIDVRLKAFSELLAEGRAKRDDTVLVQLATPSRERVDSYQQLRNDIERQVGHINGEYGEVGHPVVHYLHRPVPRNELIAFFVAADVMLVTPLRDGMNLVAKEYVACRSDLGGALVLSEFTGAAAELRQAYLVNPHDLEGVKDTVEAALNQSVEEGRRRMRSLRRQVLAHDVDRWARSFLDALAESGPRDG.

D-glucose 6-phosphate is bound at residue arginine 25. A UDP-alpha-D-glucose-binding site is contributed by 45–46; that stretch reads GG. The D-glucose 6-phosphate site is built by tyrosine 101 and aspartate 155. UDP-alpha-D-glucose contacts are provided by arginine 297 and lysine 302. Arginine 335 serves as a coordination point for D-glucose 6-phosphate. 400 to 404 contacts UDP-alpha-D-glucose; the sequence is LVAKE.

Belongs to the glycosyltransferase 20 family. In terms of assembly, homotetramer.

The enzyme catalyses ADP-alpha-D-glucose + D-glucose 6-phosphate = alpha,alpha-trehalose 6-phosphate + ADP + H(+). It catalyses the reaction CDP-alpha-D-glucose + D-glucose 6-phosphate = alpha,alpha-trehalose 6-phosphate + CDP + H(+). The catalysed reaction is GDP-alpha-D-glucose + D-glucose 6-phosphate = alpha,alpha-trehalose 6-phosphate + GDP + H(+). It carries out the reaction TDP-alpha-D-glucose + D-glucose 6-phosphate = 5-methyl-UDP + alpha,alpha-trehalose 6-phosphate + H(+). The enzyme catalyses D-glucose 6-phosphate + UDP-alpha-D-glucose = alpha,alpha-trehalose 6-phosphate + UDP + H(+). Its pathway is glycan biosynthesis; trehalose biosynthesis. Probably involved in the osmoprotection via the biosynthesis of trehalose and in the production of glycogen and alpha-glucan via the TreS-Pep2 branch involved in the biosynthesis of maltose-1-phosphate (M1P). Catalyzes the transfer of glucose from UDP-glucose (UDP-Glc) to D-glucose 6-phosphate (Glc-6-P) to form trehalose-6-phosphate. Probably also able to use ADP-Glc, CDP-Glc, GDP-Glc and TDP-Glc as glucosyl donors. This is Trehalose-6-phosphate synthase from Mycobacterium avium (strain 104).